A 917-amino-acid polypeptide reads, in one-letter code: Nitrate reductase [NADH] 1 (917 aa).

The interval 62 to 81 is disordered; sequence DSYDDSSSDDEDESHNRNVP. Acidic residues predominate over residues 63–74; that stretch reads SYDDSSSDDEDE. Cys-197 serves as a coordination point for Mo-molybdopterin. One can recognise a Cytochrome b5 heme-binding domain in the interval 545 to 620; sequence SKMYSISEVR…LEDYRIGELI (76 aa). Residues His-580 and His-603 each contribute to the heme site. Positions 660-772 constitute an FAD-binding FR-type domain; that stretch reads REKIPVRLIE…KGPLGHIEYK (113 aa). FAD contacts are provided by residues 712-715, 729-733, Phe-734, Phe-741, 746-748, and Thr-799; these read RAYT, VVKVY, and LMS.

The protein belongs to the nitrate reductase family. In terms of assembly, homodimer. FAD is required as a cofactor. It depends on heme as a cofactor. The cofactor is Mo-molybdopterin. In terms of tissue distribution, root, leaf, and shoot.

The catalysed reaction is nitrite + NAD(+) + H2O = nitrate + NADH + H(+). In terms of biological role, nitrate reductase is a key enzyme involved in the first step of nitrate assimilation in plants, fungi and bacteria. This chain is Nitrate reductase [NADH] 1 (NIA1), found in Arabidopsis thaliana (Mouse-ear cress).